Reading from the N-terminus, the 307-residue chain is Elongation factor Ts (307 aa).

Positions 79–82 are involved in Mg(2+) ion dislocation from EF-Tu; that stretch reads TDFV.

Belongs to the EF-Ts family.

The protein localises to the cytoplasm. Its function is as follows. Associates with the EF-Tu.GDP complex and induces the exchange of GDP to GTP. It remains bound to the aminoacyl-tRNA.EF-Tu.GTP complex up to the GTP hydrolysis stage on the ribosome. This is Elongation factor Ts from Rhizobium meliloti (strain 1021) (Ensifer meliloti).